We begin with the raw amino-acid sequence, 798 residues long: uncharacterized protein (798 aa).

A signal peptide spans M1 to A22. The N-palmitoyl cysteine moiety is linked to residue C23. C23 is lipidated: S-diacylglycerol cysteine. Residues S178 to R192 show a composition bias toward basic and acidic residues. 4 disordered regions span residues S178 to L204, N226 to D260, E443 to Q463, and S478 to K515. Residues K193–L204 are compositionally biased toward polar residues. A compositionally biased stretch (basic and acidic residues) spans N226–S235. The segment covering S478–D495 has biased composition (basic and acidic residues). Positions S496–K515 are enriched in polar residues.

The protein belongs to the MG185/MG260 family.

The protein localises to the cell membrane. This is an uncharacterized protein from Mycoplasma pneumoniae (strain ATCC 29342 / M129 / Subtype 1) (Mycoplasmoides pneumoniae).